A 583-amino-acid chain; its full sequence is Phosphoglucomutase, cytoplasmic 1 (583 aa).

Residues Arg25 and Ser124 each contribute to the alpha-D-glucose 1,6-bisphosphate site. Residue Ser124 is the Phosphoserine intermediate of the active site. The Mg(2+) site is built by Ser124, Asp300, Asp302, and Asp304. Ser124 is subject to Phosphoserine. 6 residues coordinate alpha-D-glucose 1,6-bisphosphate: Asp304, Arg305, Thr368, Glu387, Ser389, and Lys400.

It belongs to the phosphohexose mutase family. As to quaternary structure, monomer. It depends on Mg(2+) as a cofactor. Post-translationally, autophosphorylated. As to expression, mostly expressed in roots and coleoptiles, and, to a lower extent, in leaves, pollen and developing seeds.

The protein resides in the cytoplasm. It carries out the reaction alpha-D-glucose 1-phosphate = alpha-D-glucose 6-phosphate. The catalysed reaction is O-phospho-L-seryl-[protein] + alpha-D-glucose 1-phosphate = alpha-D-glucose 1,6-bisphosphate + L-seryl-[protein]. The enzyme catalyses alpha-D-glucose 1,6-bisphosphate + L-seryl-[protein] = O-phospho-L-seryl-[protein] + alpha-D-glucose 6-phosphate. Its function is as follows. Catalyzes the reversible isomerization of alpha-D-glucose 1-phosphate to alpha-D-glucose 6-phosphate. The mechanism proceeds via the intermediate compound alpha-D-glucose 1,6-bisphosphate. This enzyme participates in both the breakdown and synthesis of glucose. In Zea mays (Maize), this protein is Phosphoglucomutase, cytoplasmic 1.